A 197-amino-acid polypeptide reads, in one-letter code: Adenylate kinase (197 aa).

ATP is bound at residue 19–24 (GSGKGT). Positions 39-68 (SSGDLLRAEVQSGSPKGKELKAMMERGELV) are NMP. Residues Ser-40, Arg-45, 66–68 (ELV), 95–98 (RYPR), and Gln-102 each bind AMP. The tract at residues 132-142 (KRAETSNRVDD) is LID. Arg-133 serves as a coordination point for ATP. Positions 139 and 150 each coordinate AMP. Residue Gly-178 participates in ATP binding.

This sequence belongs to the adenylate kinase family. As to quaternary structure, monomer.

Its subcellular location is the cytoplasm. It carries out the reaction AMP + ATP = 2 ADP. In terms of biological role, catalyzes the reversible transfer of the terminal phosphate group between ATP and AMP. Plays an important role in cellular energy homeostasis and in adenine nucleotide metabolism. The polypeptide is Adenylate kinase (Schistosoma mansoni (Blood fluke)).